The following is a 206-amino-acid chain: Sclerostin domain-containing protein 1 (206 aa).

The signal sequence occupies residues 1–23; the sequence is MLPPAIHLSLIPLLCILMRNCLA. A disordered region spans residues 42–62; it reads AHPSSNSTLNQARNGGRHFSS. Over residues 44-62 the composition is skewed to polar residues; sequence PSSNSTLNQARNGGRHFSS. N-linked (GlcNAc...) asparagine glycosylation is present at asparagine 47. Intrachain disulfides connect cysteine 75-cysteine 133, cysteine 89-cysteine 147, cysteine 100-cysteine 163, and cysteine 104-cysteine 165. In terms of domain architecture, CTCK spans 75-170; the sequence is CRELRSTKYI…TACKCKRYTR (96 aa). N-linked (GlcNAc...) asparagine glycosylation is present at asparagine 173. The disordered stretch occupies residues 176–206; sequence SHNFESVSPAKPAQHHRERKRASKSSKHSLS. Residues 188–206 show a composition bias toward basic residues; sequence AQHHRERKRASKSSKHSLS.

It belongs to the sclerostin family. As to quaternary structure, interacts with BMP2, BMP4, BMP6 and BMP7 with high affinity. Highly expressed in kidney at renal collecting ducts level and weakly in brain.

The protein localises to the secreted. Its function is as follows. May be involved in the onset of endometrial receptivity for implantation/sensitization for the decidual cell reaction. Enhances Wnt signaling and inhibits TGF-beta signaling. Directly antagonizes activity of BMP2, BMP4, BMP6 and BMP7 in a dose-dependent manner. The polypeptide is Sclerostin domain-containing protein 1 (Sostdc1) (Mus musculus (Mouse)).